Here is a 677-residue protein sequence, read N- to C-terminus: Probable serine/threonine-protein kinase mkcF (677 aa).

One can recognise an SH3 domain in the interval 1–58 (MLYLVATGDYKGPSENHLSFTKGQRIEFLERTENGFIKGKLDGKVGIFPSSLITIETR). Residues 72 to 244 (TETKDDTGSI…SSSSSSTKRR (173 aa)) form a disordered region. Residues 79 to 94 (GSISSSTSTSTSSLTT) show a composition bias toward low complexity. Polar residues predominate over residues 105–126 (GEQQPSTSTINGQSSSTSPILQ). Over residues 127–146 (SNGTTNTTTSSTSNNNIGDN) the composition is skewed to low complexity. A compositionally biased stretch (polar residues) spans 158 to 174 (TTSNHSKSASRLSVASF). Positions 175-192 (STTTTATTTTTTTTTATS) are enriched in low complexity. Basic and acidic residues predominate over residues 209 to 224 (DKKSKDDDKSEKEGLY). The span at 230 to 240 (SSSSSSSSSSS) shows a compositional bias: low complexity. The 246-residue stretch at 401 to 646 (IKFTHMVGRG…VDKLMRHPFF (246 aa)) folds into the Protein kinase domain. Residues 407 to 415 (VGRGQYGKV) and Lys-428 contribute to the ATP site. The Proton acceptor role is filled by Asp-519.

Belongs to the protein kinase superfamily. Ser/Thr protein kinase family. STE20 subfamily. It depends on Mg(2+) as a cofactor.

The catalysed reaction is L-seryl-[protein] + ATP = O-phospho-L-seryl-[protein] + ADP + H(+). It catalyses the reaction L-threonyl-[protein] + ATP = O-phospho-L-threonyl-[protein] + ADP + H(+). This Dictyostelium discoideum (Social amoeba) protein is Probable serine/threonine-protein kinase mkcF.